The following is a 295-amino-acid chain: Non-selective voltage-gated ion channel VDAC2 (295 aa).

ATP-binding residues include K24 and K32. Residue K32 is modified to N6-acetyllysine; alternate. An N6-succinyllysine; alternate modification is found at K32. Residue K32 forms a Glycyl lysine isopeptide (Lys-Gly) (interchain with G-Cter in ubiquitin); alternate linkage. Beta stranded transmembrane passes span 38–47 and 51–59; these read LVKLDVKTKS and VEFSTSGSS. Glycyl lysine isopeptide (Lys-Gly) (interchain with G-Cter in ubiquitin) cross-links involve residues K65 and K73. The next 4 membrane-spanning stretches (beta stranded) occupy residues 66-76, 81-88, 92-101, and 107-116; these read VSGTLETKYKW, LTFTEKWN, TLGTEIAIED, and LKLTFDTTFS. The residue at position 121 (K121) is an N6-acetyllysine; alternate. K121 participates in a covalent cross-link: Glycyl lysine isopeptide (Lys-Gly) (interchain with G-Cter in ubiquitin); alternate. Glycyl lysine isopeptide (Lys-Gly) (interchain with G-Cter in ubiquitin) cross-links involve residues K122 and K125. 4 beta stranded membrane passes run 123–132, 135–142, 149–157, and 162–170; these read SGKIKSAYKR, INLGCDVD, AIHGSAVFG, and LAGYQMTFD. A Glycyl lysine isopeptide (Lys-Gly) (interchain with G-Cter in ubiquitin) cross-link involves residue K173. A run of 6 beta stranded transmembrane segments spans residues 175–187, 190–197, 201–210, 214–223, 230–239, and 243–250; these read KLTRSNFAVGYRT, FQLHTNVN, EFGGSIYQKV, FDTSVNLAWT, RFGIAAKYQL, and ASISAKVN. A Phosphoserine modification is found at S205. S252 is subject to Phosphoserine. NAD(+) is bound by residues 254–256 and 272–276; these read LIG and SALVD. The next 2 membrane-spanning stretches (beta stranded) occupy residues 254–263 and 266–275; these read LIGVGYTQTL and GVKLTLSALV. N6-acetyllysine; alternate is present on K278. K278 participates in a covalent cross-link: Glycyl lysine isopeptide (Lys-Gly) (interchain with G-Cter in ubiquitin); alternate. A beta stranded membrane pass occupies residues 285 to 294; it reads HKLGLALELE. K286 participates in a covalent cross-link: Glycyl lysine isopeptide (Lys-Gly) (interchain with G-Cter in ubiquitin).

It belongs to the eukaryotic mitochondrial porin family. As to quaternary structure, monomer, homodimer and higher order oligomers; formation of higher order structures is necessary for scramblase activity. Interacts with ARMC12 in a TBC1D21-dependent manner. Interacts with KLC3. Interacts with SPATA33. Interacts with PPP3CC in a SPATA33-dependent manner. In terms of processing, ubiquitinated by PRKN during mitophagy, leading to its degradation and enhancement of mitophagy. Deubiquitinated by USP30.

Its subcellular location is the mitochondrion outer membrane. The protein resides in the membrane. It carries out the reaction chloride(in) = chloride(out). The catalysed reaction is K(+)(in) = K(+)(out). It catalyses the reaction a 1,2-diacyl-sn-glycero-3-phospho-L-serine(in) = a 1,2-diacyl-sn-glycero-3-phospho-L-serine(out). The enzyme catalyses a 1,2-diacyl-sn-glycero-3-phosphocholine(in) = a 1,2-diacyl-sn-glycero-3-phosphocholine(out). It carries out the reaction a 1,2-diacyl-sn-glycero-3-phospho-(1D-myo-inositol)(in) = a 1,2-diacyl-sn-glycero-3-phospho-(1D-myo-inositol)(out). In terms of biological role, non-selective voltage-gated ion channel that mediates the transport of anions and cations through the mitochondrion outer membrane and plasma membrane. The channel adopts an open conformation at zero mV and a closed conformation at both positive and negative potentials. There are two populations of channels; the main that functions in a lower open-state conductance with lower ion selectivity, that switch, in a voltage-dependent manner, from the open to a low-conducting 'closed' state and the other that has a normal ion selectivity in the typical high conductance, 'open' state. Binds various lipids, including the sphingolipid ceramide, the phospholipid phosphatidylcholine, and the sterols cholesterol and oxysterol. Binding of ceramide promotes the mitochondrial outer membrane permeabilization (MOMP) apoptotic pathway. Its function is as follows. Catalyzes the scrambling of phospholipids across the outer mitochondrial membrane; the mechanism is unrelated to channel activity and is capable of translocating both anionic and zwitterionic phospholipids. The polypeptide is Non-selective voltage-gated ion channel VDAC2 (Mesocricetus auratus (Golden hamster)).